Consider the following 575-residue polypeptide: MRAWTGSWRWIMLILFAWGTLLFYIGGHLVRDNDHPDHSSRELSKILAKLERLKQQNEDLRRMAESLRIPEGPIDQGTATGRVRVLEEQLVKAKEQIENYKKQARNGLGKDHEILRRRIENGAKELWFFLQSELKKLKHLEGNELQRHADEILLDLGHHERSIMTDLYYLSQTDGAGDWREKEAKDLTELVQRRITYLQNPKDCSKARKLVCNINKGCGYGCQLHHVVYCFMIAYGTQRTLILESQNWRYATGGWETVFRPVSETCTDRSGLSTGHWSGEVNDKNIQVVELPIVDSLHPRPPYLPLAVPEDLADRLLRVHGDPAVWWVSQFVKYLIRPQPWLEKEIEEATKKLGFKHPVIGVHVRRTDKVGTEAAFHPIEEYMVHVEEHFQLLARRMQVDKKRVYLATDDPTLLKEAKTKYSNYEFISDNSISWSAGLHNRYTENSLRGVILDIHFLSQADFLVCTFSSQVCRVAYEIMQTLHPDASANFHSLDDIYYFGGQNAHNQIAVYPHKPRTEEEIPMEPGDIIGVAGNHWDGYSKGINRKLGKTGLYPSYKVREKIETVKYPTYPEAEK.

At methionine 1–arginine 9 the chain is on the cytoplasmic side. The helical; Signal-anchor for type II membrane protein transmembrane segment at tryptophan 10–valine 30 threads the bilayer. The Lumenal portion of the chain corresponds to arginine 31–lysine 575. 3 disulfides stabilise this stretch: cysteine 204–cysteine 266, cysteine 212–cysteine 230, and cysteine 218–cysteine 222. The 288-residue stretch at lysine 206–leucine 493 folds into the GT23 domain. Serine 278 carries the post-translational modification Phosphoserine. The short motif at proline 299–proline 305 is the SH3-binding element. Residues arginine 365–arginine 366 form an important for donor substrate binding region. A disulfide bond links cysteine 465 and cysteine 472. In terms of domain architecture, SH3 spans glutamine 502 to glutamate 563.

It belongs to the glycosyltransferase 23 family. Tyrosine phosphorylated by PKDCC/VLK.

The protein localises to the golgi apparatus. It is found in the golgi stack membrane. It catalyses the reaction N(4)-{beta-D-GlcNAc-(1-&gt;2)-alpha-D-Man-(1-&gt;3)-[beta-D-GlcNAc-(1-&gt;2)-alpha-D-Man-(1-&gt;6)]-beta-D-Man-(1-&gt;4)-beta-D-GlcNAc-(1-&gt;4)-beta-D-GlcNAc}-L-asparaginyl-[protein] + GDP-beta-L-fucose = an N(4)-{beta-D-GlcNAc-(1-&gt;2)-alpha-D-Man-(1-&gt;3)-[beta-D-GlcNAc-(1-&gt;2)-alpha-D-Man-(1-&gt;6)]-beta-D-Man-(1-&gt;4)-beta-D-GlcNAc-(1-&gt;4)-[alpha-L-Fuc-(1-&gt;6)]-beta-D-GlcNAc}-L-asparaginyl-[protein] + GDP + H(+). It participates in protein modification; protein glycosylation. Functionally, catalyzes the addition of fucose in alpha 1-6 linkage to the first GlcNAc residue, next to the peptide chains in N-glycans. This chain is Alpha-(1,6)-fucosyltransferase (Fut8), found in Mus musculus (Mouse).